The sequence spans 88 residues: RNA-binding protein Hfq (88 aa).

The 60-residue stretch at 9–68 (DPFLNALRRERIPVSIYLVNGIKLQGQIESFDQFVILLKNTVNQMVYKHAISTVVPARAV) folds into the Sm domain. Positions 66-88 (RAVSHHSGEQQRAPSDRPEKTED) are disordered. Over residues 71–88 (HSGEQQRAPSDRPEKTED) the composition is skewed to basic and acidic residues.

Belongs to the Hfq family. As to quaternary structure, homohexamer.

Its function is as follows. RNA chaperone that binds small regulatory RNA (sRNAs) and mRNAs to facilitate mRNA translational regulation in response to envelope stress, environmental stress and changes in metabolite concentrations. Also binds with high specificity to tRNAs. The protein is RNA-binding protein Hfq of Vibrio atlanticus (strain LGP32) (Vibrio splendidus (strain Mel32)).